The chain runs to 212 residues: Small ribosomal subunit protein uS3 (212 aa).

In terms of domain architecture, KH type-2 spans 38–106; sequence IRKFVKKTLY…EFAIEVNEIR (69 aa).

This sequence belongs to the universal ribosomal protein uS3 family. Part of the 30S ribosomal subunit. Forms a tight complex with proteins S10 and S14.

Functionally, binds the lower part of the 30S subunit head. Binds mRNA in the 70S ribosome, positioning it for translation. This chain is Small ribosomal subunit protein uS3, found in Nitratidesulfovibrio vulgaris (strain ATCC 29579 / DSM 644 / CCUG 34227 / NCIMB 8303 / VKM B-1760 / Hildenborough) (Desulfovibrio vulgaris).